A 641-amino-acid polypeptide reads, in one-letter code: Probable ATP-dependent helicase YpvA (641 aa).

Residues 29–303 (YDILPEKGFD…EFAELIEDAL (275 aa)) enclose the Helicase ATP-binding domain. 64–71 (AGVGTGKT) contributes to the ATP binding site. Residues C133, C197, C200, and C206 each coordinate [4Fe-4S] cluster. Residues 257–260 (DEGH) carry the DEGH box motif.

Belongs to the helicase family. DinG subfamily. Requires [4Fe-4S] cluster as cofactor.

It catalyses the reaction Couples ATP hydrolysis with the unwinding of duplex DNA at the replication fork by translocating in the 5'-3' direction. This creates two antiparallel DNA single strands (ssDNA). The leading ssDNA polymer is the template for DNA polymerase III holoenzyme which synthesizes a continuous strand.. The enzyme catalyses ATP + H2O = ADP + phosphate + H(+). In terms of biological role, might be a 5'-3' DNA helicase. The protein is Probable ATP-dependent helicase YpvA (ypvA) of Bacillus subtilis (strain 168).